A 374-amino-acid polypeptide reads, in one-letter code: Protein RecA (374 aa).

66-73 (GPESSGKT) is a binding site for ATP. The tract at residues 326 to 374 (KLGVGVHPEESATEPGADAASAAPADAAPAVPAPTTAKATKSKATAAKS) is disordered. The segment covering 338 to 374 (TEPGADAASAAPADAAPAVPAPTTAKATKSKATAAKS) has biased composition (low complexity).

This sequence belongs to the RecA family.

It localises to the cytoplasm. Its function is as follows. Can catalyze the hydrolysis of ATP in the presence of single-stranded DNA, the ATP-dependent uptake of single-stranded DNA by duplex DNA, and the ATP-dependent hybridization of homologous single-stranded DNAs. It interacts with LexA causing its activation and leading to its autocatalytic cleavage. The sequence is that of Protein RecA from Streptomyces coelicolor (strain ATCC BAA-471 / A3(2) / M145).